The following is a 387-amino-acid chain: MAETEKNLQSLDHIPIDVLFEILVKLPAKSVARFLCVSKVWATMIRGEVFIRSFTSYSSPQKQPRLLFALVDCLRLYNKMLYFFSKSTLVSTPLLPWDPAPGPPVKPHRFGLFWRARCLRYLPKHYKSLMEELKPKPLVVEEQPDFLSRKELRHENSSYVHGLMSFLCSGEQVIFNPSIGKSITLPTIKTSGIISQSFLGYDPINAQYKVLCLTNVTRFCEHQVLTLGAQNSSWRMIQCSTPHYCGEKSLCIDGILYYSAFTSFTTVLVRFDVRAESLEVASKFPEGLKSSNGITLINYHGKVAVVSKNYHNDHHDFNLWVLEDTKKQQWSNVLVSFHTGVTGQFHGGLEVLGTSDMGEIVFAPNHFEEFVVYFLDQKSNRIRSVLL.

The 47-residue stretch at 8–54 (LQSLDHIPIDVLFEILVKLPAKSVARFLCVSKVWATMIRGEVFIRSF) folds into the F-box domain.

This Arabidopsis thaliana (Mouse-ear cress) protein is Putative F-box protein At1g47800.